Consider the following 79-residue polypeptide: Short neurotoxin 6 (79 aa).

Positions 1-21 (MKTLLLTLVMVTIMCLDLGYT) are cleaved as a signal peptide. Cystine bridges form between C24/C41, C34/C59, C63/C71, and C72/C77.

Belongs to the three-finger toxin family. Short-chain subfamily. Type III alpha-neurotoxin sub-subfamily. As to expression, expressed by the venom gland.

The protein localises to the secreted. Its function is as follows. Binds with high affinity to muscle nicotinic acetylcholine receptor (nAChR) and hinders acetylcholine binding to the receptor, thereby impairing neuromuscular transmission. Competes with the binding of alpha-bungarotoxin on muscle AChR (from Torpedo) with an IC(50) of 0.18 uM. Causes muscle paralysis, spasms and increased respiration. The chain is Short neurotoxin 6 from Pseudonaja textilis (Eastern brown snake).